The following is a 238-amino-acid chain: Small ribosomal subunit protein uS3 (238 aa).

The region spanning 39 to 108 is the KH type-2 domain; the sequence is IRKFVKKKLF…NVAVNVIEVK (70 aa).

Belongs to the universal ribosomal protein uS3 family. In terms of assembly, part of the 30S ribosomal subunit. Forms a tight complex with proteins S10 and S14.

Functionally, binds the lower part of the 30S subunit head. Binds mRNA in the 70S ribosome, positioning it for translation. The polypeptide is Small ribosomal subunit protein uS3 (Alkaliphilus oremlandii (strain OhILAs) (Clostridium oremlandii (strain OhILAs))).